The chain runs to 392 residues: Ceramide synthase 5 (392 aa).

Residues 1-46 (MATAAQGPLSLLWGWLWSERFWLPENVSWADLEGPADGYGYPRGRH) are Lumenal-facing. Residue asparagine 26 is glycosylated (N-linked (GlcNAc...) asparagine). Residues 47-67 (ILSVFPLAAGIFFVRLLFERF) form a helical membrane-spanning segment. Residues 75-136 (CIGIEDSGPY…RHRRNQDKPP (62 aa)) form a homeobox-like region. One can recognise a TLC domain in the interval 139–340 (TKFCESMWRF…IARIALKALI (202 aa)). 4 helical membrane-spanning segments follow: residues 148 to 168 (FTFY…SPWF), 183 to 203 (LSSG…SLMF), 214 to 234 (FLIM…SYIN), and 272 to 292 (LFVI…PFWI). The Last loop motif motif lies at 299-309 (ESWEIIGPYAS). Residues 311-331 (WLLNGLLLTLQLLHVIWSYLI) traverse the membrane as a helical segment. At 332 to 392 (ARIALKALIR…HMGGSYWAEE (61 aa)) the chain is on the cytoplasmic side. Residues 349 to 392 (RSDVESSSEEEDVTTCTKSPCDSSSSNGANRVNGHMGGSYWAEE) form a disordered region. Positions 362–378 (TTCTKSPCDSSSSNGAN) are enriched in polar residues.

As to quaternary structure, interacts with PAQR4; the interaction regulates the stability and activity of CERS5 and is inhibited in presence of ceramides. Phosphorylated at the C-terminus by CK2.

Its subcellular location is the endoplasmic reticulum membrane. The catalysed reaction is a sphingoid base + hexadecanoyl-CoA = an N-hexadecanoyl-sphingoid base + CoA + H(+). It catalyses the reaction sphinganine + hexadecanoyl-CoA = N-hexadecanoylsphinganine + CoA + H(+). It carries out the reaction hexadecasphinganine + hexadecanoyl-CoA = N-hexadecanoylhexadecasphinganine + CoA + H(+). The enzyme catalyses sphing-4-enine + hexadecanoyl-CoA = N-hexadecanoylsphing-4-enine + CoA + H(+). The catalysed reaction is 2-hydroxyhexadecanoyl-CoA + sphinganine = N-(2-hydroxyhexadecanoyl)-sphinganine + CoA + H(+). It catalyses the reaction sphinganine + tetradecanoyl-CoA = N-(tetradecanoyl)-sphinganine + CoA + H(+). It carries out the reaction sphinganine + octadecanoyl-CoA = N-(octadecanoyl)-sphinganine + CoA + H(+). The enzyme catalyses sphinganine + (9Z)-octadecenoyl-CoA = N-(9Z-octadecenoyl)-sphinganine + CoA + H(+). The catalysed reaction is a fatty acyl-CoA + sphing-4-enine = an N-acylsphing-4-enine + CoA + H(+). It participates in lipid metabolism; sphingolipid metabolism. Inhibited by fumonisin B1. In terms of biological role, ceramide synthase that catalyzes the transfer of the acyl chain from acyl-CoA to a sphingoid base, with high selectivity toward palmitoyl-CoA (hexadecanoyl-CoA; C16:0-CoA). Can use other acyl donors, but with less efficiency. N-acylates sphinganine and sphingosine bases to form dihydroceramides and ceramides in de novo synthesis and salvage pathways, respectively. Plays a role in de novo ceramide synthesis and surfactant homeostasis in pulmonary epithelia. In Homo sapiens (Human), this protein is Ceramide synthase 5.